A 678-amino-acid polypeptide reads, in one-letter code: Protein distal antenna (678 aa).

The HTH psq-type domain occupies 7 to 58 (TKGKRPLRSLTPRDKIHAIQRIHDGESKASVARDIGVPESTLRGWCKNEDKL). Positions 34-54 (KASVARDIGVPESTLRGWCKN) form a DNA-binding region, H-T-H motif. 5 disordered regions span residues 232–310 (GAGN…GGPM), 344–381 (GVTS…PSGS), 445–528 (KETE…TSEC), 541–592 (GMEA…DEEE), and 645–678 (NETP…RRRK). Polar residues-rich tracts occupy residues 241-254 (PSGQ…SPRS) and 349-363 (PIRS…QLAQ). 2 positions are modified to phosphoserine: Ser-251 and Ser-254. Residues 372-381 (LTPSSTPSGS) show a composition bias toward low complexity. The segment covering 449–461 (TPSVRSLSSNEQN) has biased composition (polar residues). Over residues 462-478 (PEADEATETDLDGEVEP) the composition is skewed to acidic residues. The span at 495–508 (TPSQSPIAHSSGSR) shows a compositional bias: polar residues. Over residues 570 to 586 (NNNDVSASNNNNNNNSN) the composition is skewed to low complexity. Acidic residues predominate over residues 657–667 (EDSEEHAAEEE).

As to quaternary structure, homomers. Interacts with itself, danr, ey and dac to form a complex (or complexes) containing the RD factors. Coexpressed with danr in the presumptive distal antenna, but not in the leg imaginal disk. Both proteins are also expressed in the brain and the eye region of the eye-antenna disk. First detected in early L3 eye disks in cells surrounding the newly initiated MF. Levels are uniform and high anterior to the furrow, lower levels within and posterior to the furrow. Limited expression is seen in small groups of cells in leg and wing. These appear in the location of prominent sense organ progenitors at relatively late stages of disk development.

It localises to the nucleus. In terms of biological role, probable transcription factor with a role in the retinal determination (RD) network. Regulates ato expression and is required for normal R8 induction and differentiation. Danr appears to repress Dan expression, but Dan is required for Danr expression anterior to the morphogenetic furrow (MF). Dan and Danr lie downstream of so and require dac function for highest levels of expression. Contributes to differentiation of antenna-specific characteristics; effector gene that acts downstream of homothorax (hth), Distal-less (Dll), cut (ct) and spineless (ss) genes to control differentiation of distal antennal structures. The polypeptide is Protein distal antenna (Drosophila melanogaster (Fruit fly)).